The chain runs to 159 residues: Large ribosomal subunit protein bL17 (159 aa).

Over residues 119–138 the composition is skewed to low complexity; it reads PVTPKAKPAKSTAKAAPKSK. A disordered region spans residues 119–159; that stretch reads PVTPKAKPAKSTAKAAPKSKAPVEETPDEPASEETAEAEAD. The segment covering 143 to 159 has biased composition (acidic residues); the sequence is ETPDEPASEETAEAEAD.

Belongs to the bacterial ribosomal protein bL17 family. Part of the 50S ribosomal subunit. Contacts protein L32.

The chain is Large ribosomal subunit protein bL17 from Leifsonia xyli subsp. xyli (strain CTCB07).